Here is a 25-residue protein sequence, read N- to C-terminus: Omega-conotoxin CVIB (25 aa).

3 disulfide bridges follow: Cys1–Cys16, Cys8–Cys20, and Cys15–Cys25. Cys25 is subject to Cysteine amide.

Belongs to the conotoxin O1 superfamily. In terms of tissue distribution, expressed by the venom duct.

It is found in the secreted. Its function is as follows. Omega-conotoxins act at presynaptic membranes, they bind and block voltage-gated calcium channels (Cav). This toxin blocks N-, P- and Q-type calcium channels. It shows high activities on Cav2.1/CACNA1A (IC(50)=11 nM) and Cav2.2/CACNA1B (IC(50)=7.7 nM). In addition, it shows a higher potency when Cav2.2/CACNA1B is only expressed with the ancillary subunit CACNB3 (IC(50)=1.6 nM) than on Cav2.2/CACNA1B expressed with the ancillary subunits CACNA2D1 and CACNB3 (IC(50)=12 nM). Both the Cav2.2/CACNA1B block by this toxin and the recovery are voltage-independent. It is noteworthy that ancillary subunits beta do not modulate recovery from this toxin block, since Cav2.2/CACNA1B expressed with either the ancillary subunit CACNB2a (isoform 2a) or with CACNB3 exhibits moderate recovery. This Conus catus (Cat cone) protein is Omega-conotoxin CVIB.